The chain runs to 190 residues: ATP-dependent Clp protease proteolytic subunit 2 (190 aa).

Ser98 acts as the Nucleophile in catalysis. His123 is a catalytic residue.

This sequence belongs to the peptidase S14 family. Fourteen ClpP subunits assemble into 2 heptameric rings which stack back to back to give a disk-like structure with a central cavity, resembling the structure of eukaryotic proteasomes.

The protein localises to the cytoplasm. It catalyses the reaction Hydrolysis of proteins to small peptides in the presence of ATP and magnesium. alpha-casein is the usual test substrate. In the absence of ATP, only oligopeptides shorter than five residues are hydrolyzed (such as succinyl-Leu-Tyr-|-NHMec, and Leu-Tyr-Leu-|-Tyr-Trp, in which cleavage of the -Tyr-|-Leu- and -Tyr-|-Trp bonds also occurs).. Its function is as follows. Cleaves peptides in various proteins in a process that requires ATP hydrolysis. Has a chymotrypsin-like activity. Plays a major role in the degradation of misfolded proteins. The polypeptide is ATP-dependent Clp protease proteolytic subunit 2 (Bacillus licheniformis (strain ATCC 14580 / DSM 13 / JCM 2505 / CCUG 7422 / NBRC 12200 / NCIMB 9375 / NCTC 10341 / NRRL NRS-1264 / Gibson 46)).